A 30-amino-acid chain; its full sequence is Dermaseptin-DI4 (30 aa).

As to expression, expressed by the skin glands.

It is found in the secreted. Its function is as follows. Antibacterial activity against Gram-positive bacteria S.aureus and E.faecalis, and Gram-negative bacteria P.aeruginosa and E.coli. The polypeptide is Dermaseptin-DI4 (Phyllomedusa distincta (Monkey frog)).